We begin with the raw amino-acid sequence, 488 residues long: Inosine-5'-monophosphate dehydrogenase (488 aa).

CBS domains lie at 95-153 (VISN…SIKI) and 157-216 (MTQE…AKDE). NAD(+) contacts are provided by residues Asp250 and 300-302 (GIG). Positions 302 and 304 each coordinate K(+). Residue Ser305 coordinates IMP. Position 307 (Cys307) interacts with K(+). The active-site Thioimidate intermediate is Cys307. Residues 340 to 342 (DGG), 363 to 364 (GS), and 387 to 391 (YRGMG) each bind IMP. Arg403 functions as the Proton acceptor in the catalytic mechanism. Position 417 (Glu417) interacts with IMP. The disordered stretch occupies residues 468 to 488 (GLAESHPHNIQITKESPNYSF). Glu471, Ser472, and His473 together coordinate K(+). The span at 475 to 488 (HNIQITKESPNYSF) shows a compositional bias: polar residues.

This sequence belongs to the IMPDH/GMPR family. Homotetramer. The cofactor is K(+).

It carries out the reaction IMP + NAD(+) + H2O = XMP + NADH + H(+). It functions in the pathway purine metabolism; XMP biosynthesis via de novo pathway; XMP from IMP: step 1/1. Mycophenolic acid (MPA) is a non-competitive inhibitor that prevents formation of the closed enzyme conformation by binding to the same site as the amobile flap. In contrast, mizoribine monophosphate (MZP) is a competitive inhibitor that induces the closed conformation. MPA is a potent inhibitor of mammalian IMPDHs but a poor inhibitor of the bacterial enzymes. MZP is a more potent inhibitor of bacterial IMPDH. Its function is as follows. Catalyzes the conversion of inosine 5'-phosphate (IMP) to xanthosine 5'-phosphate (XMP), the first committed and rate-limiting step in the de novo synthesis of guanine nucleotides, and therefore plays an important role in the regulation of cell growth. The protein is Inosine-5'-monophosphate dehydrogenase of Staphylococcus aureus (strain MW2).